A 634-amino-acid chain; its full sequence is Calcium up-regulated protein D (634 aa).

The segment at 1–23 is disordered; that stretch reads MINIEDISKSSNQSEEKQLKSTS. 2 Ricin B-type lectin domains span residues 27 to 146 and 117 to 250; these read KPKY…WTTF and PGNG…WGIN.

It belongs to the cup family.

The protein resides in the cytoplasm. The protein localises to the membrane. In terms of biological role, may play an important role in stabilizing and/or regulating the cell membrane during Ca(2+) stress or certain stages of development. The sequence is that of Calcium up-regulated protein D (cupD) from Dictyostelium discoideum (Social amoeba).